We begin with the raw amino-acid sequence, 302 residues long: Beta-lactamase (302 aa).

A compositionally biased stretch (basic residues) spans 1–11 (MADRRRVHAWA). Positions 1–29 (MADRRRVHAWARARPAAPEPAPPTPSAAA) are cleaved as a signal peptide. The disordered stretch occupies residues 1-43 (MADRRRVHAWARARPAAPEPAPPTPSAAAPSVAPGPAATPPDP). Over residues 26-36 (SAAAPSVAPGP) the composition is skewed to low complexity. Catalysis depends on S85, which acts as the Acyl-ester intermediate. S143 contributes to the substrate binding site. E179 (proton acceptor) is an active-site residue. Position 247 to 249 (247 to 249 (KTG)) interacts with substrate.

It belongs to the class-A beta-lactamase family.

The protein localises to the secreted. The catalysed reaction is a beta-lactam + H2O = a substituted beta-amino acid. Active on penicillins but not on cephalosporins. This chain is Beta-lactamase (bla), found in Amycolatopsis lactamdurans (Nocardia lactamdurans).